Reading from the N-terminus, the 146-residue chain is Transcriptional regulator MraZ (146 aa).

SpoVT-AbrB domains are found at residues 5–51 (NHPT…PLQE) and 80–123 (GQMV…NHEA).

It belongs to the MraZ family. As to quaternary structure, forms oligomers.

It localises to the cytoplasm. It is found in the nucleoid. The protein is Transcriptional regulator MraZ of Acidobacterium capsulatum (strain ATCC 51196 / DSM 11244 / BCRC 80197 / JCM 7670 / NBRC 15755 / NCIMB 13165 / 161).